We begin with the raw amino-acid sequence, 375 residues long: Probable trehalose-phosphate phosphatase 7 (375 aa).

The protein belongs to the trehalose phosphatase family. The cofactor is a divalent metal cation.

It catalyses the reaction alpha,alpha-trehalose 6-phosphate + H2O = alpha,alpha-trehalose + phosphate. It functions in the pathway glycan biosynthesis; trehalose biosynthesis. Functionally, removes the phosphate from trehalose 6-phosphate to produce free trehalose. Trehalose accumulation in plant may improve abiotic stress tolerance. This chain is Probable trehalose-phosphate phosphatase 7 (TPP7), found in Oryza sativa subsp. japonica (Rice).